Reading from the N-terminus, the 650-residue chain is Chaperone protein DnaK (650 aa).

Position 200 is a phosphothreonine; by autocatalysis (Thr-200). The disordered stretch occupies residues 613–634; it reads QAGAAGAAGAAEGAAHAGGAQQ.

Belongs to the heat shock protein 70 family.

Its function is as follows. Acts as a chaperone. The chain is Chaperone protein DnaK from Burkholderia vietnamiensis (strain G4 / LMG 22486) (Burkholderia cepacia (strain R1808)).